Here is a 702-residue protein sequence, read N- to C-terminus: Ribosomal RNA large subunit methyltransferase K/L (702 aa).

One can recognise a THUMP domain in the interval 43 to 154; sequence LVYQSLMWSR…KETASIALDL (112 aa).

It belongs to the methyltransferase superfamily. RlmKL family.

It is found in the cytoplasm. It carries out the reaction guanosine(2445) in 23S rRNA + S-adenosyl-L-methionine = N(2)-methylguanosine(2445) in 23S rRNA + S-adenosyl-L-homocysteine + H(+). It catalyses the reaction guanosine(2069) in 23S rRNA + S-adenosyl-L-methionine = N(2)-methylguanosine(2069) in 23S rRNA + S-adenosyl-L-homocysteine + H(+). Specifically methylates the guanine in position 2445 (m2G2445) and the guanine in position 2069 (m7G2069) of 23S rRNA. The chain is Ribosomal RNA large subunit methyltransferase K/L from Shigella dysenteriae serotype 1 (strain Sd197).